The sequence spans 60 residues: Large ribosomal subunit protein uL30 (60 aa).

Belongs to the universal ribosomal protein uL30 family. In terms of assembly, part of the 50S ribosomal subunit.

The polypeptide is Large ribosomal subunit protein uL30 (Syntrophobacter fumaroxidans (strain DSM 10017 / MPOB)).